Reading from the N-terminus, the 147-residue chain is Myoglobin (147 aa).

The Globin domain occupies 2–141; sequence ADFDAVLKCW…IIADLEANYK (140 aa). His-60 is a binding site for nitrite. His-60 serves as a coordination point for O2. His-89 serves as a coordination point for heme b.

It belongs to the globin family. Monomeric.

The protein localises to the cytoplasm. Its subcellular location is the sarcoplasm. The enzyme catalyses Fe(III)-heme b-[protein] + nitric oxide + H2O = Fe(II)-heme b-[protein] + nitrite + 2 H(+). It carries out the reaction H2O2 + AH2 = A + 2 H2O. Its function is as follows. Monomeric heme protein which primary function is to store oxygen and facilitate its diffusion within muscle tissues. Reversibly binds oxygen through a pentacoordinated heme iron and enables its timely and efficient release as needed during periods of heightened demand. Depending on the oxidative conditions of tissues and cells, and in addition to its ability to bind oxygen, it also has a nitrite reductase activity whereby it regulates the production of bioactive nitric oxide. Under stress conditions, like hypoxia and anoxia, it also protects cells against reactive oxygen species thanks to its pseudoperoxidase activity. The sequence is that of Myoglobin (mb) from Thunnus obesus (Bigeye tuna).